The primary structure comprises 469 residues: Mannosyl-oligosaccharide 1,2-alpha-mannosidase IA (469 aa).

Residues 1 to 469 (REPADAAVRE…DQKEVEVKVK (469 aa)) lie on the Lumenal side of the membrane. C292 and C324 are joined by a disulfide. N-linked (GlcNAc...) asparagine glycosylation is present at N329. Catalysis depends on E338, which acts as the Proton donor. T449 contacts Ca(2+).

The protein belongs to the glycosyl hydrolase 47 family. It depends on Ca(2+) as a cofactor.

Its subcellular location is the golgi apparatus membrane. The enzyme catalyses N(4)-(alpha-D-Man-(1-&gt;2)-alpha-D-Man-(1-&gt;2)-alpha-D-Man-(1-&gt;3)-[alpha-D-Man-(1-&gt;2)-alpha-D-Man-(1-&gt;3)-[alpha-D-Man-(1-&gt;2)-alpha-D-Man-(1-&gt;6)]-alpha-D-Man-(1-&gt;6)]-beta-D-Man-(1-&gt;4)-beta-D-GlcNAc-(1-&gt;4)-beta-D-GlcNAc)-L-asparaginyl-[protein] (N-glucan mannose isomer 9A1,2,3B1,2,3) + 4 H2O = N(4)-(alpha-D-Man-(1-&gt;3)-[alpha-D-Man-(1-&gt;3)-[alpha-D-Man-(1-&gt;6)]-alpha-D-Man-(1-&gt;6)]-beta-D-Man-(1-&gt;4)-beta-D-GlcNAc-(1-&gt;4)-beta-D-GlcNAc)-L-asparaginyl-[protein] (N-glucan mannose isomer 5A1,2) + 4 beta-D-mannose. It carries out the reaction N(4)-(alpha-D-Man-(1-&gt;2)-alpha-D-Man-(1-&gt;2)-alpha-D-Man-(1-&gt;3)-[alpha-D-Man-(1-&gt;3)-[alpha-D-Man-(1-&gt;2)-alpha-D-Man-(1-&gt;6)]-alpha-D-Man-(1-&gt;6)]-beta-D-Man-(1-&gt;4)-beta-D-GlcNAc-(1-&gt;4)-beta-D-GlcNAc)-L-asparaginyl-[protein] (N-glucan mannose isomer 8A1,2,3B1,3) + 3 H2O = N(4)-(alpha-D-Man-(1-&gt;3)-[alpha-D-Man-(1-&gt;3)-[alpha-D-Man-(1-&gt;6)]-alpha-D-Man-(1-&gt;6)]-beta-D-Man-(1-&gt;4)-beta-D-GlcNAc-(1-&gt;4)-beta-D-GlcNAc)-L-asparaginyl-[protein] (N-glucan mannose isomer 5A1,2) + 3 beta-D-mannose. Its pathway is protein modification; protein glycosylation. Its activity is regulated as follows. Inhibited by both 1-deoxymannojirimycin and kifunensine. Its function is as follows. Involved in the maturation of Asn-linked oligosaccharides. Progressively trim alpha-1,2-linked mannose residues from Man(9)GlcNAc(2) to produce Man(5)GlcNAc(2). This chain is Mannosyl-oligosaccharide 1,2-alpha-mannosidase IA (MAN1A1), found in Oryctolagus cuniculus (Rabbit).